The primary structure comprises 495 residues: Aspartyl/glutamyl-tRNA(Asn/Gln) amidotransferase subunit B (495 aa).

It belongs to the GatB/GatE family. GatB subfamily. As to quaternary structure, heterotrimer of A, B and C subunits.

The enzyme catalyses L-glutamyl-tRNA(Gln) + L-glutamine + ATP + H2O = L-glutaminyl-tRNA(Gln) + L-glutamate + ADP + phosphate + H(+). It carries out the reaction L-aspartyl-tRNA(Asn) + L-glutamine + ATP + H2O = L-asparaginyl-tRNA(Asn) + L-glutamate + ADP + phosphate + 2 H(+). Allows the formation of correctly charged Asn-tRNA(Asn) or Gln-tRNA(Gln) through the transamidation of misacylated Asp-tRNA(Asn) or Glu-tRNA(Gln) in organisms which lack either or both of asparaginyl-tRNA or glutaminyl-tRNA synthetases. The reaction takes place in the presence of glutamine and ATP through an activated phospho-Asp-tRNA(Asn) or phospho-Glu-tRNA(Gln). The sequence is that of Aspartyl/glutamyl-tRNA(Asn/Gln) amidotransferase subunit B from Acinetobacter baylyi (strain ATCC 33305 / BD413 / ADP1).